Consider the following 85-residue polypeptide: Beta-insect depressant toxin Lqh-dprIT3a (85 aa).

The signal sequence occupies residues 1 to 21; it reads MKLLLLLTISASMLIEGLVNA. Positions 22–82 constitute an LCN-type CS-alpha/beta domain; it reads DGYIRGGDGC…EWDYETNTCG (61 aa). Disulfide bonds link cysteine 31–cysteine 81, cysteine 35–cysteine 56, cysteine 42–cysteine 63, and cysteine 46–cysteine 65. A Glycine amide modification is found at glycine 82.

Belongs to the long (4 C-C) scorpion toxin superfamily. Sodium channel inhibitor family. Beta subfamily. Expressed by the venom gland.

Its subcellular location is the secreted. Its function is as follows. Depressant insect beta-toxins cause a transient contraction paralysis followed by a slow flaccid paralysis. They bind voltage-independently at site-4 of sodium channels (Nav) and block action potentials, primarily by depolarizing the axonal membrane and suppressing the sodium current. This depressant toxin is active only on insects. It is found in a relatively small amount in the venom, and its activity on insects is 10-fold higher compared to other known depressant toxins. The protein is Beta-insect depressant toxin Lqh-dprIT3a of Leiurus hebraeus (Hebrew deathstalker scorpion).